The following is a 50-amino-acid chain: Sperm protamine P1 (50 aa).

The protein belongs to the protamine P1 family. In terms of assembly, cross-linked by interchain disulfide bonds around the DNA-helix. In terms of tissue distribution, testis.

Its subcellular location is the nucleus. It localises to the chromosome. In terms of biological role, protamines substitute for histones in the chromatin of sperm during the haploid phase of spermatogenesis. They compact sperm DNA into a highly condensed, stable and inactive complex. This chain is Sperm protamine P1 (PRM1), found in Pan paniscus (Pygmy chimpanzee).